A 162-amino-acid polypeptide reads, in one-letter code: uncharacterized protein (162 aa).

This is an uncharacterized protein from Homo sapiens (Human).